Reading from the N-terminus, the 300-residue chain is Ubiquinone biosynthesis protein COQ4, mitochondrial (300 aa).

Zn(2+) contacts are provided by His173, Asp174, His177, and Glu189.

This sequence belongs to the COQ4 family. As to quaternary structure, component of a multi-subunit COQ enzyme complex, composed of at least COQ3, COQ4, COQ5, COQ6, COQ7 and COQ9. Zn(2+) is required as a cofactor.

It localises to the mitochondrion inner membrane. It catalyses the reaction a 4-hydroxy-3-methoxy-5-(all-trans-polyprenyl)benzoate + H(+) = a 2-methoxy-6-(all-trans-polyprenyl)phenol + CO2. It functions in the pathway cofactor biosynthesis; ubiquinone biosynthesis. Functionally, lyase that catalyzes the C1-decarboxylation of 4-hydroxy-3-methoxy-5-(all-trans-polyprenyl)benzoic acid into 2-methoxy-6-(all-trans-polyprenyl)phenol during ubiquinone biosynthesis. The chain is Ubiquinone biosynthesis protein COQ4, mitochondrial from Cryptococcus neoformans var. neoformans serotype D (strain B-3501A) (Filobasidiella neoformans).